The primary structure comprises 248 residues: Acetoacetyl-CoA reductase (248 aa).

NADP(+) contacts are provided by residues 14–16, arginine 42, and 90–94; these read GGI and NAGIT. Substrate-binding positions include aspartate 96 and 149–152; that span reads QFGQ. Tyrosine 155 functions as the Proton acceptor in the catalytic mechanism. 185–188 is a binding site for NADP(+); that stretch reads PGYT. Substrate contacts are provided by residues 186-187 and arginine 197; that span reads GY.

The protein belongs to the short-chain dehydrogenases/reductases (SDR) family.

It localises to the cytoplasm. The catalysed reaction is a (3R)-3-hydroxyacyl-CoA + NADP(+) = a 3-oxoacyl-CoA + NADPH + H(+). It participates in biopolymer metabolism; poly-(R)-3-hydroxybutanoate biosynthesis. The polypeptide is Acetoacetyl-CoA reductase (phaB) (Acinetobacter sp. (strain RA3849)).